The primary structure comprises 1526 residues: DNA topoisomerase 2-alpha (1526 aa).

Position 1 is an N-acetylmethionine (M1). A disordered region spans residues M1–E21. The residue at position 4 (S4) is a Phosphoserine. Residue K17 forms a Glycyl lysine isopeptide (Lys-Gly) (interchain with G-Cter in SUMO2) linkage. Residues N90, N119, and S147–N149 each bind ATP. Residues K155 and K156 each participate in a glycyl lysine isopeptide (Lys-Gly) (interchain with G-Cter in SUMO2) cross-link. Position 160–167 (G160–K167) interacts with ATP. K260 participates in a covalent cross-link: Glycyl lysine isopeptide (Lys-Gly) (interchain with G-Cter in SUMO2). T281 is subject to Phosphothreonine. Positions K341–K343 are interaction with DNA. A Glycyl lysine isopeptide (Lys-Gly) (interchain with G-Cter in SUMO2) cross-link involves residue K351. Q375–K377 contacts ATP. Glycyl lysine isopeptide (Lys-Gly) (interchain with G-Cter in SUMO2) cross-links involve residues K385, K396, K415, K417, K424, and K439. A Toprim domain is found at C454–E571. E460 is a binding site for Mg(2+). Residues K465, K479, and K528 each participate in a glycyl lysine isopeptide (Lys-Gly) (interchain with G-Cter in SUMO2) cross-link. Mg(2+) contacts are provided by D540 and D542. Residues K583, K598, K613, K621, K624, K631, K638, K654, K661, and K675 each participate in a glycyl lysine isopeptide (Lys-Gly) (interchain with G-Cter in SUMO2) cross-link. One can recognise a Topo IIA-type catalytic domain in the interval I714–L1166. The O-(5'-phospho-DNA)-tyrosine intermediate role is filled by Y804. Residues K989–S998 form an interaction with DNA region. Residue K1074 forms a Glycyl lysine isopeptide (Lys-Gly) (interchain with G-Cter in SUMO2) linkage. Disordered stretches follow at residues W1089–G1117 and E1180–Q1217. Over residues D1098 to N1109 the composition is skewed to acidic residues. At S1105 the chain carries Phosphoserine; by CK1. Glycyl lysine isopeptide (Lys-Gly) (interchain with G-Cter in SUMO2) cross-links involve residues K1191 and K1199. S1208 bears the Phosphoserine mark. K1223 is covalently cross-linked (Glycyl lysine isopeptide (Lys-Gly) (interchain with G-Cter in SUMO2)). A disordered region spans residues K1233–F1526. K1235 is covalently cross-linked (Glycyl lysine isopeptide (Lys-Gly) (interchain with G-Cter in SUMO1); alternate). Residue K1235 forms a Glycyl lysine isopeptide (Lys-Gly) (interchain with G-Cter in SUMO2); alternate linkage. T1242 bears the Phosphothreonine mark. K1254 is covalently cross-linked (Glycyl lysine isopeptide (Lys-Gly) (interchain with G-Cter in SUMO2)). Residues Q1255–P1265 show a composition bias toward basic and acidic residues. Glycyl lysine isopeptide (Lys-Gly) (interchain with G-Cter in SUMO2) cross-links involve residues K1271, K1278, and K1281. Residues S1290, S1292, S1294, and S1297 each carry the phosphoserine modification. Phosphothreonine is present on T1322. The segment covering L1325–F1344 has biased composition (acidic residues). A phosphoserine mark is found at S1327 and S1332. The residue at position 1349 (T1349) is a Phosphothreonine. Glycyl lysine isopeptide (Lys-Gly) (interchain with G-Cter in SUMO2) cross-links involve residues K1358, K1362, and K1368. 2 positions are modified to phosphoserine: S1369 and S1372. A Glycyl lysine isopeptide (Lys-Gly) (interchain with G-Cter in SUMO2) cross-link involves residue K1380. 2 positions are modified to phosphoserine: S1382 and S1386. Residues S1405–G1426 are compositionally biased toward low complexity. A Glycyl lysine isopeptide (Lys-Gly) (interchain with G-Cter in SUMO2); alternate cross-link involves residue K1417. K1417 carries the N6-acetyllysine; alternate modification. Positions K1428–K1434 are interaction with PLSCR1. Residue K1437 forms a Glycyl lysine isopeptide (Lys-Gly) (interchain with G-Cter in SUMO2); alternate linkage. At K1437 the chain carries N6-acetyllysine; alternate. Residues K1449 and K1454 each participate in a glycyl lysine isopeptide (Lys-Gly) (interchain with G-Cter in SUMO2) cross-link. Residues S1464, S1466, S1469, and S1471 each carry the phosphoserine modification. Glycyl lysine isopeptide (Lys-Gly) (interchain with G-Cter in SUMO2) cross-links involve residues K1479 and K1487. Over residues S1486–L1497 the composition is skewed to basic and acidic residues. Position 1520 is a phosphoserine (S1520).

This sequence belongs to the type II topoisomerase family. In terms of assembly, homodimer. Interacts with COPS5. Interacts with RECQL5; this stimulates DNA decatenation. Interacts with SETMAR; stimulates the topoisomerase activity. Interacts with DHX9; this interaction occurs in a E2 enzyme UBE2I- and RNA-dependent manner, negatively regulates DHX9-mediated double-stranded DNA and RNA duplex helicase activity and stimulates TOP2A-mediated supercoiled DNA relaxation activity. Interacts with HNRNPU (via C-terminus); this interaction protects the topoisomerase TOP2A from degradation and positively regulates the relaxation of supercoiled DNA in a RNA-dependent manner. Interacts with MCM3AP. Interacts with ERCC6. Interacts with PLSCR1. Interacts with GCNA; this interaction allows the resolution of topoisomerase II (TOP2A) DNA-protein cross-links. Interacts with POL1RA/RPA1 (via dock II) and UBTF in the context of Pol I complex; may assist Pol I transcription initiation by releasing supercoils occurring during DNA unwinding. Interacts with TPRN; TPRN interacts with a number of DNA damage response proteins, is recruited to sites of DNA damage and may play a role in DNA damage repair. It depends on Mg(2+) as a cofactor. Mn(2+) is required as a cofactor. Ca(2+) serves as cofactor. In terms of processing, phosphorylation has no effect on catalytic activity. However, phosphorylation at Ser-1105 by CSNK1D/CK1 promotes DNA cleavable complex formation.

It is found in the cytoplasm. Its subcellular location is the nucleus. The protein resides in the nucleoplasm. The protein localises to the nucleolus. It carries out the reaction ATP-dependent breakage, passage and rejoining of double-stranded DNA.. Functionally, key decatenating enzyme that alters DNA topology by binding to two double-stranded DNA molecules, generating a double-stranded break in one of the strands, passing the intact strand through the broken strand, and religating the broken strand. May play a role in regulating the period length of BMAL1 transcriptional oscillation. This is DNA topoisomerase 2-alpha (TOP2A) from Cricetulus griseus (Chinese hamster).